Here is a 145-residue protein sequence, read N- to C-terminus: Cuticle protein 65 (145 aa).

A run of 7 repeats spans residues A27–A30, A33–V37, A39–A42, A86–V89, A92–A95, A98–A101, and A123–A126.

Functionally, component of the cuticle of migratory locust which contains more than 100 different structural proteins. The polypeptide is Cuticle protein 65 (Locusta migratoria (Migratory locust)).